The following is a 219-amino-acid chain: MHSLSKSAMFRKGLVYSFPIVMAYIPVAFTFGVLARTLGFSEVEAMLASLLIFAGASQFALITLYSQSLLSAIFIPIFLNLRHIIYSSIIAQKLKLRFPHISAFGLTDEVFAVSVNSAENERFLLGLELGSYSAWVGGTALGVLAGSTLILDRDVYSALVFSISALFLVLLLPNLKGRHVRAAVSGGAVALAFHLLNLTSVGIIAAALAGPLLSGWDGE.

5 consecutive transmembrane segments (helical) span residues Leu14 to Leu34, Thr37 to Ser57, Phe123 to Val143, Val155 to Leu175, and Val189 to Ala209.

It belongs to the AzlC family.

The protein resides in the cell membrane. This is an uncharacterized protein from Archaeoglobus fulgidus (strain ATCC 49558 / DSM 4304 / JCM 9628 / NBRC 100126 / VC-16).